The chain runs to 227 residues: Large ribosomal subunit protein uL1 (227 aa).

The protein belongs to the universal ribosomal protein uL1 family. As to quaternary structure, part of the 50S ribosomal subunit.

Binds directly to 23S rRNA. The L1 stalk is quite mobile in the ribosome, and is involved in E site tRNA release. Functionally, protein L1 is also a translational repressor protein, it controls the translation of the L11 operon by binding to its mRNA. This Mesoplasma florum (strain ATCC 33453 / NBRC 100688 / NCTC 11704 / L1) (Acholeplasma florum) protein is Large ribosomal subunit protein uL1.